Consider the following 274-residue polypeptide: Putative ABC transporter ATP-binding protein MM_1037 (274 aa).

Residues Ile2–Pro235 enclose the ABC transporter domain. Gly35–Ser42 is a binding site for ATP.

It belongs to the ABC transporter superfamily.

The protein localises to the cell membrane. Functionally, probably part of an ABC transporter complex. Responsible for energy coupling to the transport system. In Methanosarcina mazei (strain ATCC BAA-159 / DSM 3647 / Goe1 / Go1 / JCM 11833 / OCM 88) (Methanosarcina frisia), this protein is Putative ABC transporter ATP-binding protein MM_1037.